Reading from the N-terminus, the 274-residue chain is MQPLHGNCLIAYARHKYILTMVNGEYRYFNGGDLVFADASQIQVDKCVENFVLVSRDTLSLFLPMLKEEALKLHAHKKVPSLLVHHCTRDIPVFQEVAQLSQNKNLRYAEMLRKRALIFALLSVFLEDTQFIPLLLNVLQPNMRTRVCTVINNNIAHEWTLARIASELLMSPSLLKKKLREEGTSYSQLLTECRMQRALQLIVIYGVSIKRVAVSCGYHSVSYFIYVFRNYYGMTPTEYQERSAQELPNCGPAASMAAQGNFYGTDRSAEGIRL.

One can recognise an HTH araC/xylS-type domain in the interval 145-242; it reads TRVCTVINNN…GMTPTEYQER (98 aa). DNA-binding regions (H-T-H motif) lie at residues 162–183 and 209–232; these read ARIA…REEG and IKRV…RNYY.

As to quaternary structure, homodimer.

Positively regulates the expression of about fifteen genes involved in acid resistance such as gadA, gadB and gadC. Depending on the conditions (growth phase and medium), can repress gadW. Negatively regulates perA expression in acidic conditions and positively regulates it in alkaline conditions. The protein is HTH-type transcriptional regulator GadX (gadX) of Escherichia coli O127:H6 (strain E2348/69 / EPEC).